A 316-amino-acid chain; its full sequence is tRNA dimethylallyltransferase (316 aa).

17–24 lines the ATP pocket; it reads GPTASGKT. 19–24 lines the substrate pocket; sequence TASGKT. 4 interaction with substrate tRNA regions span residues 42–45, 166–170, 247–252, and 280–287; these read DSAL, QRLSR, RCVGYR, and KRQITWLR.

This sequence belongs to the IPP transferase family. Monomer. Mg(2+) serves as cofactor.

It catalyses the reaction adenosine(37) in tRNA + dimethylallyl diphosphate = N(6)-dimethylallyladenosine(37) in tRNA + diphosphate. Its function is as follows. Catalyzes the transfer of a dimethylallyl group onto the adenine at position 37 in tRNAs that read codons beginning with uridine, leading to the formation of N6-(dimethylallyl)adenosine (i(6)A). This is tRNA dimethylallyltransferase from Cronobacter sakazakii (strain ATCC BAA-894) (Enterobacter sakazakii).